A 562-amino-acid chain; its full sequence is Glutamine--tRNA ligase (562 aa).

Residues 35–45 carry the 'HIGH' region motif; sequence PEPNGYLHIGH. Residues 36-38 and 42-48 contribute to the ATP site; these read EPN and HIGHAKS. Positions 68 and 213 each coordinate L-glutamine. ATP is bound by residues threonine 232 and 264-265; that span reads RL. The 'KMSKS' region motif lies at 271–275; it reads ITSKR.

It belongs to the class-I aminoacyl-tRNA synthetase family. Monomer.

It is found in the cytoplasm. It carries out the reaction tRNA(Gln) + L-glutamine + ATP = L-glutaminyl-tRNA(Gln) + AMP + diphosphate. In Neisseria gonorrhoeae (strain ATCC 700825 / FA 1090), this protein is Glutamine--tRNA ligase.